Consider the following 449-residue polypeptide: Adenylosuccinate synthetase (449 aa).

GTP contacts are provided by residues G12 to K18 and G40 to T42. D13 acts as the Proton acceptor in catalysis. Residues D13 and G40 each coordinate Mg(2+). Residues D13–K16, N38–H41, T128, R142, Q223, T238, and R302 each bind IMP. Catalysis depends on H41, which acts as the Proton donor. T298 to R304 is a binding site for substrate. Residues R304, K330 to D332, and S412 to G414 each bind GTP.

Belongs to the adenylosuccinate synthetase family. As to quaternary structure, homodimer. Mg(2+) is required as a cofactor.

The protein localises to the cytoplasm. The enzyme catalyses IMP + L-aspartate + GTP = N(6)-(1,2-dicarboxyethyl)-AMP + GDP + phosphate + 2 H(+). Its pathway is purine metabolism; AMP biosynthesis via de novo pathway; AMP from IMP: step 1/2. Functionally, plays an important role in the de novo pathway of purine nucleotide biosynthesis. Catalyzes the first committed step in the biosynthesis of AMP from IMP. The chain is Adenylosuccinate synthetase from Synechococcus sp. (strain JA-2-3B'a(2-13)) (Cyanobacteria bacterium Yellowstone B-Prime).